The chain runs to 228 residues: Venom allergen 5 (228 aa).

The signal sequence occupies residues 1–22 (MTKIDLLARVFVIATIIALATA). 3 cysteine pairs are disulfide-bonded: cysteine 30-cysteine 124, cysteine 51-cysteine 117, and cysteine 195-cysteine 212. The region spanning 69 to 214 (KEHNDYGHKV…WNKHFLVCNY (146 aa)) is the SCP domain.

The protein belongs to the CRISP family. Venom allergen 5-like subfamily. In terms of tissue distribution, expressed by the venom gland.

Its subcellular location is the secreted. This chain is Venom allergen 5, found in Rhynchium brunneum (Potter wasp).